A 328-amino-acid chain; its full sequence is L-lactate dehydrogenase (328 aa).

Residues V18, E39, K46, Y71, and 85 to 86 (GA) each bind NAD(+). The substrate site is built by Q88 and R94. NAD(+)-binding positions include S107, 124–126 (AAN), and S149. A substrate-binding site is contributed by 126–129 (NPVD). A substrate-binding site is contributed by 154–157 (DSAR). 2 residues coordinate beta-D-fructose 1,6-bisphosphate: R159 and H174. H181 serves as the catalytic Proton acceptor. Phosphotyrosine is present on Y226. Residue T235 coordinates substrate.

The protein belongs to the LDH/MDH superfamily. LDH family. As to quaternary structure, homotetramer.

The protein localises to the cytoplasm. The enzyme catalyses (S)-lactate + NAD(+) = pyruvate + NADH + H(+). Its pathway is fermentation; pyruvate fermentation to lactate; (S)-lactate from pyruvate: step 1/1. With respect to regulation, allosterically activated by fructose 1,6-bisphosphate (FBP). In terms of biological role, catalyzes the conversion of lactate to pyruvate. This chain is L-lactate dehydrogenase, found in Streptococcus thermophilus (strain CNRZ 1066).